We begin with the raw amino-acid sequence, 438 residues long: Dol-P-Man:Man(5)GlcNAc(2)-PP-Dol alpha-1,3-mannosyltransferase (438 aa).

At serine 13 the chain carries Phosphoserine. 11 helical membrane-spanning segments follow: residues 41 to 61, 95 to 115, 123 to 143, 149 to 169, 172 to 192, 203 to 223, 231 to 251, 289 to 309, 332 to 352, 356 to 376, and 407 to 427; these read YTLL…FWVI, TGPL…FYAT, MAQN…FLIY, VPPF…SIFV, LFND…FLAQ, LAVS…FLLL, ALPK…PFLL, FHLA…LCRW, ALTP…GICF, LHYQ…WAMP, and AALH…PESF.

The protein belongs to the glycosyltransferase ALG3 family.

It is found in the endoplasmic reticulum membrane. It catalyses the reaction an alpha-D-Man-(1-&gt;2)-alpha-D-Man-(1-&gt;2)-alpha-D-Man-(1-&gt;3)-[alpha-D-Man-(1-&gt;6)]-beta-D-Man-(1-&gt;4)-beta-D-GlcNAc-(1-&gt;4)-alpha-D-GlcNAc-diphospho-di-trans,poly-cis-dolichol + a di-trans,poly-cis-dolichyl beta-D-mannosyl phosphate = an alpha-D-Man-(1-&gt;2)-alpha-D-Man-(1-&gt;2)-alpha-D-Man-(1-&gt;3)-[alpha-D-Man-(1-&gt;3)-alpha-D-Man-(1-&gt;6)]-beta-D-Man-(1-&gt;4)-beta-D-GlcNAc-(1-&gt;4)-alpha-D-GlcNAc-diphospho-di-trans,poly-cis-dolichol + a di-trans,poly-cis-dolichyl phosphate + H(+). Its pathway is protein modification; protein glycosylation. Its function is as follows. Dol-P-Man:Man(5)GlcNAc(2)-PP-Dol alpha-1,3-mannosyltransferase that operates in the biosynthetic pathway of dolichol-linked oligosaccharides, the glycan precursors employed in protein asparagine (N)-glycosylation. The assembly of dolichol-linked oligosaccharides begins on the cytosolic side of the endoplasmic reticulum membrane and finishes in its lumen. The sequential addition of sugars to dolichol pyrophosphate produces dolichol-linked oligosaccharides containing fourteen sugars, including two GlcNAcs, nine mannoses and three glucoses. Once assembled, the oligosaccharide is transferred from the lipid to nascent proteins by oligosaccharyltransferases. In the lumen of the endoplasmic reticulum, adds the first dolichyl beta-D-mannosyl phosphate derived mannose in an alpha-1,3 linkage to Man(5)GlcNAc(2)-PP-dolichol to produce Man(6)GlcNAc(2)-PP-dolichol. Man(6)GlcNAc(2)-PP-dolichol is a substrate for ALG9, the following enzyme in the biosynthetic pathway. The chain is Dol-P-Man:Man(5)GlcNAc(2)-PP-Dol alpha-1,3-mannosyltransferase from Mus musculus (Mouse).